Reading from the N-terminus, the 242-residue chain is Small ribosomal subunit protein uS2 (242 aa).

The protein belongs to the universal ribosomal protein uS2 family.

The chain is Small ribosomal subunit protein uS2 from Vibrio campbellii (strain ATCC BAA-1116).